Here is a 316-residue protein sequence, read N- to C-terminus: MTKREQSLATPYLQFDRTQWAALRDSVPLTLTEEEIVKLKGINEDLSLDEVAQIYLPLSRLLNFYISSNLRRQAVLEQFLGTDGQRIPYVIGIAGSVAVGKSTTARLLQALLSRWPEHRSVELITTDGFLHPNKVLNERGLMKKKGFPESYDMHNLVKFVSEVKSGADYVTAPVYSHLIYDVVPDGNKVIKQPDILILEGLNVLQSGMDYPHDPHHVFVSDFVDFSIYVDAPEDLLQSWYINRFLKFRQGAFSNPDSYFHNYAKLPETEAIKIATQLWNEINGLNLKQNILPTRERASLIMTKSANHAVESVRLRK.

95 to 102 (GSVAVGKS) serves as a coordination point for ATP.

The protein belongs to the prokaryotic pantothenate kinase family.

It localises to the cytoplasm. It catalyses the reaction (R)-pantothenate + ATP = (R)-4'-phosphopantothenate + ADP + H(+). It functions in the pathway cofactor biosynthesis; coenzyme A biosynthesis; CoA from (R)-pantothenate: step 1/5. The chain is Pantothenate kinase from Yersinia pseudotuberculosis serotype O:3 (strain YPIII).